Here is a 351-residue protein sequence, read N- to C-terminus: Spermidine/putrescine import ATP-binding protein PotA (351 aa).

One can recognise an ABC transporter domain in the interval 6-236 (LELRNVTKEY…PENAWVANFI (231 aa)). 38 to 45 (GPSGCGKT) provides a ligand contact to ATP.

The protein belongs to the ABC transporter superfamily. Spermidine/putrescine importer (TC 3.A.1.11.1) family. As to quaternary structure, the complex is composed of two ATP-binding proteins (PotA), two transmembrane proteins (PotB and PotC) and a solute-binding protein (PotD).

It localises to the cell membrane. It catalyses the reaction ATP + H2O + polyamine-[polyamine-binding protein]Side 1 = ADP + phosphate + polyamineSide 2 + [polyamine-binding protein]Side 1.. In terms of biological role, part of the ABC transporter complex PotABCD involved in spermidine/putrescine import. Responsible for energy coupling to the transport system. This is Spermidine/putrescine import ATP-binding protein PotA from Mycoplasma mycoides subsp. mycoides SC (strain CCUG 32753 / NCTC 10114 / PG1).